The chain runs to 528 residues: MAIVETVIDGINYFLSLSVTQQISILLGVPFVYNLVWQYLYSLRKDRAPLVFYWIPWFGSAASYGQQPYEFFESCRQKYGDVFSFMLLGKIMTVYLGPKGHEFVFNAKLSDVSAEDAYKHLTTPVFGKGVIYDCPNSRLMEQKKFAKFALTTDSFKRYVPKIREEILNYFVTDESFKLKEKTHGVANVMKTQPEITIFTASRSLFGDEMRRIFDRSFAQLYSDLDKGFTPINFVFPNLPLPHYWRRDAAQKKISATYMKEIKSRRERGDIDPNRDLIDSLLIHSTYKDGVKMTDQEIANLLIGILMGGQHTSASTSAWFLLHLGEKPHLQDVIYQEVVELLKEKGGDLNDLTYEDLQKLPSVNNTIKETLRMHMPLHSIFRKVTNPLRIPETNYIVPKGHYVLVSPGYAHTSERYFDNPEDFDPTRWDTAAAKANSVSFNSSDEVDYGFGKVSKGVSSPYLPFGGGRHRCIGEQFAYVQLGTILTTFVYNLRWTIDGYKVPDPDYSSMVVLPTEPAEIIWEKRETCMF.

A helical transmembrane segment spans residues 15 to 37; it reads LSLSVTQQISILLGVPFVYNLVW. Position 64 (tyrosine 64) interacts with oteseconazole. Tyrosine 118 serves as a coordination point for itraconazole. Residue glycine 307 coordinates posaconazole. An oteseconazole-binding site is contributed by histidine 377. Cysteine 470 contacts heme.

This sequence belongs to the cytochrome P450 family. Heme serves as cofactor.

It is found in the endoplasmic reticulum membrane. It catalyses the reaction a 14alpha-methyl steroid + 3 reduced [NADPH--hemoprotein reductase] + 3 O2 = a Delta(14) steroid + formate + 3 oxidized [NADPH--hemoprotein reductase] + 4 H2O + 4 H(+). The catalysed reaction is a 14alpha-methyl steroid + reduced [NADPH--hemoprotein reductase] + O2 = a 14alpha-hydroxymethyl steroid + oxidized [NADPH--hemoprotein reductase] + H2O + H(+). The enzyme catalyses a 14alpha-hydroxymethyl steroid + reduced [NADPH--hemoprotein reductase] + O2 = a 14alpha-formyl steroid + oxidized [NADPH--hemoprotein reductase] + 2 H2O + H(+). It carries out the reaction a 14alpha-formyl steroid + reduced [NADPH--hemoprotein reductase] + O2 = a Delta(14) steroid + formate + oxidized [NADPH--hemoprotein reductase] + H2O + 2 H(+). It catalyses the reaction lanosterol + 3 reduced [NADPH--hemoprotein reductase] + 3 O2 = 4,4-dimethyl-5alpha-cholesta-8,14,24-trien-3beta-ol + formate + 3 oxidized [NADPH--hemoprotein reductase] + 4 H2O + 4 H(+). The catalysed reaction is lanosterol + reduced [NADPH--hemoprotein reductase] + O2 = 32-hydroxylanosterol + oxidized [NADPH--hemoprotein reductase] + H2O + H(+). The enzyme catalyses 32-hydroxylanosterol + reduced [NADPH--hemoprotein reductase] + O2 = 32-oxolanosterol + oxidized [NADPH--hemoprotein reductase] + 2 H2O + H(+). It carries out the reaction 32-oxolanosterol + reduced [NADPH--hemoprotein reductase] + O2 = 4,4-dimethyl-5alpha-cholesta-8,14,24-trien-3beta-ol + formate + oxidized [NADPH--hemoprotein reductase] + H2O + 2 H(+). It catalyses the reaction eburicol + 3 reduced [NADPH--hemoprotein reductase] + 3 O2 = 14-demethyleburicol + formate + 3 oxidized [NADPH--hemoprotein reductase] + 4 H2O + 4 H(+). The catalysed reaction is eburicol + reduced [NADPH--hemoprotein reductase] + O2 = 32-hydroxyeburicol + oxidized [NADPH--hemoprotein reductase] + H2O + H(+). The enzyme catalyses 32-hydroxyeburicol + reduced [NADPH--hemoprotein reductase] + O2 = 32-oxoeburicol + oxidized [NADPH--hemoprotein reductase] + 2 H2O + H(+). It carries out the reaction 32-oxoeburicol + reduced [NADPH--hemoprotein reductase] + O2 = 14-demethyleburicol + formate + oxidized [NADPH--hemoprotein reductase] + H2O + 2 H(+). It functions in the pathway steroid biosynthesis; zymosterol biosynthesis; zymosterol from lanosterol: step 1/6. The catalytic activity is inhibited by the binding of azoles clotrimazole, miconazole, fluconazole, ketoconazole, oteseconazole (VT-1161), tetraconazole, the triazole SCH39304, and the triazole derivative ICI 153066. Sterol 14alpha-demethylase that plays a critical role in the third module of ergosterol biosynthesis pathway, being ergosterol the major sterol component in fungal membranes that participates in a variety of functions. The third module or late pathway involves the ergosterol synthesis itself through consecutive reactions that mainly occur in the endoplasmic reticulum (ER) membrane. In filamentous fungi, during the initial step of this module, lanosterol (lanosta-8,24-dien-3beta-ol) can be metabolized to eburicol. Sterol 14alpha-demethylase catalyzes the three-step oxidative removal of the 14alpha-methyl group (C-32) of both these sterols in the form of formate, and converts eburicol and lanosterol to 14-demethyleburicol (4,4,24-trimethylergosta-8,14,24(28)-trienol) and 4,4-dimethyl-5alpha-cholesta-8,14,24-trien-3beta-ol, respectively, which are further metabolized by other enzymes in the pathway to ergosterol. Can also use substrates not intrinsic to fungi, such as 24,25-dihydrolanosterol (DHL), producing 4,4-dimethyl-8,14-cholestadien-3-beta-ol, but at lower rates than the endogenous substrates. This is Lanosterol 14-alpha demethylase from Candida albicans (strain SC5314 / ATCC MYA-2876) (Yeast).